A 114-amino-acid chain; its full sequence is Cytochrome c oxidase subunit 7A2-like, mitochondrial (114 aa).

The transit peptide at 1–55 directs the protein to the mitochondrion; it reads MYYKFSGFTQKLAGAWASDAYSPQGLRPVVSTEAPPIIFATPTKLSSGPTAYDYA. Lys-69 is modified (N6-acetyllysine). The chain crosses the membrane as a helical span at residues 82–107; sequence PDQMLYRTTMALTVGGTIYCLIALYM.

The protein belongs to the cytochrome c oxidase VIIa family. As to quaternary structure, interacts with the mitochondrial respiratory complexes III (CIII) and IV (CIV), promoting their association.

It is found in the mitochondrion inner membrane. Its function is as follows. Assembly factor that mediates the formation of some mitochondrial respiratory supercomplexes (respirasomes), thereby promoting oxidative phosphorylation and energy metabolism. Acts as a molecular adapter that associates with both mitochondrial respiratory complexes III (CIII) and IV (CIV), promoting their association. Mediates the formation of various mitochondrial respiratory supercomplexes, such as MCIII(2)IV(2), composed of two CIII and two CIV, and the CS-respirasome (MCI(1)III(2)IV(2)), composed of one CI, two CIII and two CIV. Not involved in the formation of the canonical respirasome (MCI(1)III(2)IV(1)), composed of one CI, two CIII and one CIV. The formation of different respirasomes is important for cell adaptation to oxygen conditions and prevent metabolic exhaustion: supercomplexes mediated by COX7A2L/SCAF1 are required to maintain oxidative phosphorylation upon low oxygen conditions and promote metabolic rewiring toward glycolysis. In Bos taurus (Bovine), this protein is Cytochrome c oxidase subunit 7A2-like, mitochondrial.